A 186-amino-acid polypeptide reads, in one-letter code: Putative 3-methyladenine DNA glycosylase (186 aa).

It belongs to the DNA glycosylase MPG family.

This chain is Putative 3-methyladenine DNA glycosylase, found in Borrelia garinii subsp. bavariensis (strain ATCC BAA-2496 / DSM 23469 / PBi) (Borreliella bavariensis).